The sequence spans 362 residues: Aminomethyltransferase (362 aa).

The protein belongs to the GcvT family. In terms of assembly, the glycine cleavage system is composed of four proteins: P, T, L and H.

The catalysed reaction is N(6)-[(R)-S(8)-aminomethyldihydrolipoyl]-L-lysyl-[protein] + (6S)-5,6,7,8-tetrahydrofolate = N(6)-[(R)-dihydrolipoyl]-L-lysyl-[protein] + (6R)-5,10-methylene-5,6,7,8-tetrahydrofolate + NH4(+). In terms of biological role, the glycine cleavage system catalyzes the degradation of glycine. In Chlorobium limicola (strain DSM 245 / NBRC 103803 / 6330), this protein is Aminomethyltransferase.